A 529-amino-acid polypeptide reads, in one-letter code: Peptide chain release factor 3 (529 aa).

A tr-type G domain is found at 11–280 (SKRRTFAIIS…SLIKWAPSPI (270 aa)). GTP-binding positions include 20-27 (SHPDAGKT), 88-92 (DTPGH), and 142-145 (NKLD).

It belongs to the TRAFAC class translation factor GTPase superfamily. Classic translation factor GTPase family. PrfC subfamily.

It localises to the cytoplasm. Increases the formation of ribosomal termination complexes and stimulates activities of RF-1 and RF-2. It binds guanine nucleotides and has strong preference for UGA stop codons. It may interact directly with the ribosome. The stimulation of RF-1 and RF-2 is significantly reduced by GTP and GDP, but not by GMP. The chain is Peptide chain release factor 3 from Buchnera aphidicola subsp. Schizaphis graminum (strain Sg).